Reading from the N-terminus, the 188-residue chain is Elongation factor P-like protein (188 aa).

It belongs to the elongation factor P family.

The chain is Elongation factor P-like protein from Saccharophagus degradans (strain 2-40 / ATCC 43961 / DSM 17024).